The sequence spans 115 residues: Nucleoid-associated protein PMN2A_1347 (115 aa).

A disordered region spans residues 89–115 (STSTMKERMEDLTGGFKLNLPGMGEEN).

The protein belongs to the YbaB/EbfC family. In terms of assembly, homodimer.

The protein resides in the cytoplasm. The protein localises to the nucleoid. Binds to DNA and alters its conformation. May be involved in regulation of gene expression, nucleoid organization and DNA protection. This Prochlorococcus marinus (strain NATL2A) protein is Nucleoid-associated protein PMN2A_1347.